The primary structure comprises 45 residues: Turripeptide OL11-like (45 aa).

3 disulfides stabilise this stretch: cysteine 1-cysteine 31, cysteine 5-cysteine 24, and cysteine 13-cysteine 45. The region spanning 1–45 (CMTICTMEYWPVCGSDGKTYPNKCHLTSTACTSQKDITVLHEGKC) is the Kazal-like domain.

The protein belongs to the conopeptide P-like superfamily. In terms of tissue distribution, expressed by the venom duct.

The protein localises to the secreted. Functionally, acts as a neurotoxin by inhibiting an ion channel. May also act as a serine protease inhibitor, since it possess the kazal serine protease inhibitor signature. In Lophiotoma albina (Sea snail), this protein is Turripeptide OL11-like.